The primary structure comprises 193 residues: ECF RNA polymerase sigma factor SigK (193 aa).

The segment at 35–101 (LYDRTRSRVY…RRAVDRVRSE (67 aa)) is sigma-70 factor domain-2. The Polymerase core binding motif lies at 59–62 (ETTQ). The segment at 140–187 (MGSLSDLQREAIQLAYYEGLTYVQVSERLSANLATIKSRMRDGIRGLK) is sigma-70 factor domain-4. Residues 161-180 (YVQVSERLSANLATIKSRMR) constitute a DNA-binding region (H-T-H motif).

The protein belongs to the sigma-70 factor family. ECF subfamily. As to quaternary structure, interacts transiently with the RNA polymerase catalytic core formed by RpoA, RpoB, RpoC and RpoZ (2 alpha, 1 beta, 1 beta' and 1 omega subunit) to form the RNA polymerase holoenzyme that can initiate transcription. Interacts (via sigma-70 factor domain 4) with anti-sigma-K factor RskA.

Functionally, sigma factors are initiation factors that promote the attachment of RNA polymerase to specific initiation sites and are then released. Extracytoplasmic function (ECF) sigma factors are held in an inactive form by an anti-sigma factor until released by regulated intramembrane proteolysis. The polypeptide is ECF RNA polymerase sigma factor SigK (sigK) (Mycobacterium sp. (strain JLS)).